A 265-amino-acid chain; its full sequence is tRNA(His) guanylyltransferase (265 aa).

Asp-29, Gly-30, and Asp-76 together coordinate Mg(2+). Residues 29–34 (DGKGFH) and 75–76 (SD) each bind GTP.

The protein belongs to the tRNA(His) guanylyltransferase family. Mg(2+) is required as a cofactor.

It catalyses the reaction a 5'-end ribonucleotide-tRNA(His) + GTP + ATP + H2O = a 5'-end phospho-guanosine-ribonucleotide-tRNA(His) + AMP + 2 diphosphate + H(+). Its function is as follows. Adds a GMP to the 5'-end of tRNA(His) after transcription and RNase P cleavage. This is tRNA(His) guanylyltransferase (THG1) from Debaryomyces hansenii (strain ATCC 36239 / CBS 767 / BCRC 21394 / JCM 1990 / NBRC 0083 / IGC 2968) (Yeast).